Here is a 424-residue protein sequence, read N- to C-terminus: Protein CLP1 homolog (424 aa).

ATP-binding positions include glutamate 19, lysine 60, and 122 to 127; that span reads DVGKST.

It belongs to the Clp1 family. Clp1 subfamily.

It localises to the nucleus. Its function is as follows. Required for endonucleolytic cleavage during polyadenylation-dependent pre-mRNA 3'-end formation. The polypeptide is Protein CLP1 homolog (cbc) (Aedes aegypti (Yellowfever mosquito)).